Here is a 231-residue protein sequence, read N- to C-terminus: Lipoprotein-releasing system ATP-binding protein LolD (231 aa).

Residues 11–231 form the ABC transporter domain; the sequence is LRLEGLTRRF…TLRDGKLVPF (221 aa). 47–54 contributes to the ATP binding site; the sequence is APSGTGKS.

Belongs to the ABC transporter superfamily. Lipoprotein translocase (TC 3.A.1.125) family. The complex is composed of two ATP-binding proteins (LolD) and two transmembrane proteins (LolC and LolE).

The protein resides in the cell inner membrane. Functionally, part of the ABC transporter complex LolCDE involved in the translocation of mature outer membrane-directed lipoproteins, from the inner membrane to the periplasmic chaperone, LolA. Responsible for the formation of the LolA-lipoprotein complex in an ATP-dependent manner. The polypeptide is Lipoprotein-releasing system ATP-binding protein LolD (Gluconobacter oxydans (strain 621H) (Gluconobacter suboxydans)).